The sequence spans 439 residues: GTPase Der (439 aa).

EngA-type G domains follow at residues 4-166 (PIVA…PAQD) and 175-350 (IRIA…EEAS). Residues 10–17 (GRPNVGKS), 57–61 (DTGGL), 119–122 (NKVE), 181–188 (GRPNVGKS), 228–232 (DTAGM), and 293–296 (NKWD) contribute to the GTP site. The KH-like domain maps to 351-435 (KRVATADLNN…PIRFFLRKRE (85 aa)).

Belongs to the TRAFAC class TrmE-Era-EngA-EngB-Septin-like GTPase superfamily. EngA (Der) GTPase family. In terms of assembly, associates with the 50S ribosomal subunit.

GTPase that plays an essential role in the late steps of ribosome biogenesis. In Desulforamulus reducens (strain ATCC BAA-1160 / DSM 100696 / MI-1) (Desulfotomaculum reducens), this protein is GTPase Der.